We begin with the raw amino-acid sequence, 562 residues long: Potassium-transporting ATPase potassium-binding subunit (562 aa).

12 helical membrane-spanning segments follow: residues 6 to 26 (FLLIASFMVVLFVLSRPLGGF), 63 to 83 (ALAILCFNLLGIVLLFVLLMA), 132 to 152 (GLTVQNFLSAATGIAVAFALI), 175 to 195 (LYVLLPIALIIALIFVSQGVL), 253 to 273 (FVQMLAIFLIPCALCFAFGQV), 283 to 303 (LIWAMSLIFIVAVVVVMYAEL), 327 to 347 (FGILATSLYAVVTTAASCGAV), 356 to 376 (ALGGMIPLWLMQIGEVVFGGV), 379 to 399 (GLYGMLLFVLLTVFIAGLMIG), 416 to 436 (MTALAILVTPTIVLLGTALAL), 483 to 503 (LLLAAAMFIGRFGVILPVLAI), and 526 to 546 (LFIGLLIGTVLLVGALTFIPA).

The protein belongs to the KdpA family. In terms of assembly, the system is composed of three essential subunits: KdpA, KdpB and KdpC.

The protein resides in the cell inner membrane. In terms of biological role, part of the high-affinity ATP-driven potassium transport (or Kdp) system, which catalyzes the hydrolysis of ATP coupled with the electrogenic transport of potassium into the cytoplasm. This subunit binds the periplasmic potassium ions and delivers the ions to the membrane domain of KdpB through an intramembrane tunnel. This chain is Potassium-transporting ATPase potassium-binding subunit, found in Yersinia pseudotuberculosis serotype O:1b (strain IP 31758).